The primary structure comprises 627 residues: Protein CER1-like 1 (627 aa).

5 helical membrane passes run 19-39 (FKYL…VTAV), 48-68 (LMIV…ISVS), 126-146 (GAIL…YWFH), 186-206 (LLFA…IVSI), and 328-348 (YLTC…TSAI). The 135-residue stretch at 138–272 (VEFLYYWFHR…MPIYDFIYGT (135 aa)) folds into the Fatty acid hydroxylase domain.

The protein belongs to the sterol desaturase family. As to expression, expressed in flowers and siliques. Not detected in pollen, pedicels and seeds.

The protein resides in the membrane. In Arabidopsis thaliana (Mouse-ear cress), this protein is Protein CER1-like 1.